The chain runs to 205 residues: Methylthioribulose-1-phosphate dehydratase (205 aa).

The Zn(2+) site is built by histidine 96 and histidine 98.

The protein belongs to the aldolase class II family. MtnB subfamily. The cofactor is Zn(2+).

It carries out the reaction 5-(methylsulfanyl)-D-ribulose 1-phosphate = 5-methylsulfanyl-2,3-dioxopentyl phosphate + H2O. Its pathway is amino-acid biosynthesis; L-methionine biosynthesis via salvage pathway; L-methionine from S-methyl-5-thio-alpha-D-ribose 1-phosphate: step 2/6. Functionally, catalyzes the dehydration of methylthioribulose-1-phosphate (MTRu-1-P) into 2,3-diketo-5-methylthiopentyl-1-phosphate (DK-MTP-1-P). The chain is Methylthioribulose-1-phosphate dehydratase from Pseudomonas aeruginosa (strain LESB58).